Reading from the N-terminus, the 311-residue chain is Mycothiol acetyltransferase (311 aa).

Glu-35 serves as a coordination point for 1D-myo-inositol 2-(L-cysteinylamino)-2-deoxy-alpha-D-glucopyranoside. An acetyl-CoA-binding site is contributed by Leu-79–Val-81. The N-acetyltransferase domain occupies Val-155–Asp-311. 1D-myo-inositol 2-(L-cysteinylamino)-2-deoxy-alpha-D-glucopyranoside contacts are provided by Glu-180, Lys-225, and Glu-235. Residues Leu-239–Val-241 and Gln-246–Gln-252 each bind acetyl-CoA. Tyr-278 lines the 1D-myo-inositol 2-(L-cysteinylamino)-2-deoxy-alpha-D-glucopyranoside pocket. Residue Asn-283–Arg-288 participates in acetyl-CoA binding.

The protein belongs to the acetyltransferase family. MshD subfamily. Monomer.

It carries out the reaction 1D-myo-inositol 2-(L-cysteinylamino)-2-deoxy-alpha-D-glucopyranoside + acetyl-CoA = mycothiol + CoA + H(+). Catalyzes the transfer of acetyl from acetyl-CoA to desacetylmycothiol (Cys-GlcN-Ins) to form mycothiol. In Mycobacterium leprae (strain Br4923), this protein is Mycothiol acetyltransferase.